The primary structure comprises 324 residues: Quinolinate synthase (324 aa).

Iminosuccinate contacts are provided by H39 and S56. C101 provides a ligand contact to [4Fe-4S] cluster. Iminosuccinate is bound by residues 127 to 129 (YIN) and S144. C187 is a binding site for [4Fe-4S] cluster. Iminosuccinate is bound by residues 213-215 (HPE) and T230. A [4Fe-4S] cluster-binding site is contributed by C280.

The protein belongs to the quinolinate synthase family. Type 2 subfamily. [4Fe-4S] cluster serves as cofactor.

It is found in the cytoplasm. It catalyses the reaction iminosuccinate + dihydroxyacetone phosphate = quinolinate + phosphate + 2 H2O + H(+). The protein operates within cofactor biosynthesis; NAD(+) biosynthesis; quinolinate from iminoaspartate: step 1/1. Functionally, catalyzes the condensation of iminoaspartate with dihydroxyacetone phosphate to form quinolinate. The protein is Quinolinate synthase of Nostoc sp. (strain PCC 7120 / SAG 25.82 / UTEX 2576).